The chain runs to 994 residues: Regulator of telomere elongation helicase 1 homolog (994 aa).

Residues 15–324 enclose the Helicase ATP-binding domain; the sequence is SKTSIKFPFE…KLIENLRTED (310 aa). 50–57 contacts ATP; that stretch reads SPTGTGKT. Residues Cys142, Cys160, Cys169, and Cys208 each contribute to the [4Fe-4S] cluster site. Positions 251-254 match the DEAH box motif; the sequence is DEAH. Over residues 818 to 831 the composition is skewed to basic and acidic residues; that stretch reads KIEKKEKIEPRPIK. Positions 818–896 are disordered; sequence KIEKKEKIEP…HVVSGSEPPK (79 aa). A compositionally biased stretch (polar residues) spans 833 to 844; the sequence is DSSSSSVFSLPT. Positions 847–856 are enriched in basic and acidic residues; sequence DELKVKKWEQ. Polar residues-rich tracts occupy residues 859–869 and 880–889; these read DSQTNVSSSSD and PGNSSGQHVV.

This sequence belongs to the helicase family. RAD3/XPD subfamily.

Its subcellular location is the nucleus. It catalyses the reaction ATP + H2O = ADP + phosphate + H(+). In terms of biological role, a probable ATP-dependent DNA helicase implicated in DNA repair and the maintenance of genomic stability. Acts as an anti-recombinase to counteract toxic recombination and limit crossover during meiosis. Regulates meiotic recombination and crossover homeostasis by physically dissociating strand invasion events and thereby promotes noncrossover repair by meiotic synthesis dependent strand annealing (SDSA) as well as disassembly of D loop recombination intermediates. The protein is Regulator of telomere elongation helicase 1 homolog of Caenorhabditis briggsae.